The primary structure comprises 367 residues: UDP-N-acetylglucosamine--N-acetylmuramyl-(pentapeptide) pyrophosphoryl-undecaprenol N-acetylglucosamine transferase (367 aa).

Residues 15 to 17 (TGG), N127, R163, S191, I249, and Q294 each bind UDP-N-acetyl-alpha-D-glucosamine.

This sequence belongs to the glycosyltransferase 28 family. MurG subfamily.

It localises to the cell inner membrane. The catalysed reaction is di-trans,octa-cis-undecaprenyl diphospho-N-acetyl-alpha-D-muramoyl-L-alanyl-D-glutamyl-meso-2,6-diaminopimeloyl-D-alanyl-D-alanine + UDP-N-acetyl-alpha-D-glucosamine = di-trans,octa-cis-undecaprenyl diphospho-[N-acetyl-alpha-D-glucosaminyl-(1-&gt;4)]-N-acetyl-alpha-D-muramoyl-L-alanyl-D-glutamyl-meso-2,6-diaminopimeloyl-D-alanyl-D-alanine + UDP + H(+). It functions in the pathway cell wall biogenesis; peptidoglycan biosynthesis. Cell wall formation. Catalyzes the transfer of a GlcNAc subunit on undecaprenyl-pyrophosphoryl-MurNAc-pentapeptide (lipid intermediate I) to form undecaprenyl-pyrophosphoryl-MurNAc-(pentapeptide)GlcNAc (lipid intermediate II). The polypeptide is UDP-N-acetylglucosamine--N-acetylmuramyl-(pentapeptide) pyrophosphoryl-undecaprenol N-acetylglucosamine transferase (Burkholderia cenocepacia (strain ATCC BAA-245 / DSM 16553 / LMG 16656 / NCTC 13227 / J2315 / CF5610) (Burkholderia cepacia (strain J2315))).